The sequence spans 109 residues: RNA-binding protein Hfq (109 aa).

Positions 9-68 (DPFLNALRKEKVNVSVYLVNGIKLQGQVEAFDQFCIVLRNTVNQMVYKHAISTIVPAKSV) constitute a Sm domain. The tract at residues 77-109 (PYHQNSNDEQDENVDDIHSDDLEIQENEGNIHE) is disordered.

Belongs to the Hfq family. In terms of assembly, homohexamer.

In terms of biological role, RNA chaperone that binds small regulatory RNA (sRNAs) and mRNAs to facilitate mRNA translational regulation in response to envelope stress, environmental stress and changes in metabolite concentrations. Also binds with high specificity to tRNAs. The polypeptide is RNA-binding protein Hfq (Francisella tularensis subsp. mediasiatica (strain FSC147)).